Reading from the N-terminus, the 62-residue chain is Small ribosomal subunit protein eS17 (62 aa).

Belongs to the eukaryotic ribosomal protein eS17 family.

The polypeptide is Small ribosomal subunit protein eS17 (Methanocaldococcus jannaschii (strain ATCC 43067 / DSM 2661 / JAL-1 / JCM 10045 / NBRC 100440) (Methanococcus jannaschii)).